The chain runs to 133 residues: ATP synthase epsilon chain, chloroplastic (133 aa).

It belongs to the ATPase epsilon chain family. F-type ATPases have 2 components, CF(1) - the catalytic core - and CF(0) - the membrane proton channel. CF(1) has five subunits: alpha(3), beta(3), gamma(1), delta(1), epsilon(1). CF(0) has three main subunits: a, b and c.

It is found in the plastid. The protein resides in the chloroplast thylakoid membrane. In terms of biological role, produces ATP from ADP in the presence of a proton gradient across the membrane. The chain is ATP synthase epsilon chain, chloroplastic from Gossypium barbadense (Sea Island cotton).